A 273-amino-acid chain; its full sequence is Putative peptidyl-prolyl cis-trans isomerase Cbf2 (273 aa).

Residues 1–21 (MKKFSLVAAALIAGVALNVNA) form the signal peptide. Residues 131 to 228 (PARVQAKHIL…FGYHVILKEN (98 aa)) enclose the PpiC domain.

The catalysed reaction is [protein]-peptidylproline (omega=180) = [protein]-peptidylproline (omega=0). In Campylobacter jejuni subsp. jejuni serotype O:23/36 (strain 81-176), this protein is Putative peptidyl-prolyl cis-trans isomerase Cbf2 (cbf2).